A 398-amino-acid polypeptide reads, in one-letter code: Apolipoprotein L1 (398 aa).

Residues 1–27 (MEGAALLRVSVLCIWMSALFLGVGVRA) form the signal peptide. The segment covering 35–47 (QQNVPSGTDTGDP) has biased composition (polar residues). A disordered region spans residues 35–55 (QQNVPSGTDTGDPQSKPLGDW). Asn-261 is a glycosylation site (N-linked (GlcNAc...) asparagine). The segment at 297–317 (PHASASRPRVTEPISAESGEQ) is disordered. Residues Ser-311 and Ser-314 each carry the phosphoserine; by FAM20C modification.

It belongs to the apolipoprotein L family. In terms of assembly, in plasma, interacts with APOA1 and mainly associated with large high density lipoprotein particles. Phosphorylated by FAM20C in the extracellular medium. In terms of tissue distribution, plasma. Found on APOA-I-containing high density lipoprotein (HDL3). Expressed in pancreas, lung, prostate, liver, placenta and spleen.

The protein localises to the secreted. In terms of biological role, may play a role in lipid exchange and transport throughout the body. May participate in reverse cholesterol transport from peripheral cells to the liver. This chain is Apolipoprotein L1 (APOL1), found in Homo sapiens (Human).